The chain runs to 322 residues: GRB2-related adaptor protein 2 (322 aa).

In terms of domain architecture, SH3 1 spans 1–56 (MEATAKFDFMASGEDELSFRTGDILKILSNQEEWLKAELGSQEGYVPKNFIDIEFP). Phosphotyrosine is present on Tyr45. Residues 58 to 149 (WFHEGLSRHQ…QKQVFLRDGT (92 aa)) form the SH2 domain. Lys106 is subject to N6-acetyllysine. Positions 143–216 (VFLRDGTQDQ…TPGPQPPQQQ (74 aa)) are disordered. The segment covering 148–163 (GTQDQGHRGNSLDRRS) has biased composition (basic and acidic residues). Ser186 carries the post-translational modification Phosphoserine. Residues 193 to 204 (PQQFHPHQQPSP) show a composition bias toward low complexity. Ser230 bears the Phosphoserine mark. Thr254 carries the post-translational modification Phosphothreonine. One can recognise an SH3 2 domain in the interval 263–322 (GRVRWARALYDFEALEEDELGFRSGEVVEVLDSSNPSWWTGRLHNKLGLFPANYVAPMMR).

This sequence belongs to the GRB2/sem-5/DRK family. Interacts with phosphorylated LAT and LAX1 upon TCR activation. Interacts with SHB. Interacts with PTPN23. Interacts with phosphorylated LIME1 upon TCR activation.

It localises to the nucleus. Its subcellular location is the cytoplasm. It is found in the endosome. In terms of biological role, interacts with SLP-76 to regulate NF-AT activation. Binds to tyrosine-phosphorylated shc. This chain is GRB2-related adaptor protein 2 (Grap2), found in Mus musculus (Mouse).